The primary structure comprises 246 residues: Pyridoxine 5'-phosphate synthase (246 aa).

Residue Asn9 coordinates 3-amino-2-oxopropyl phosphate. 1-deoxy-D-xylulose 5-phosphate is bound at residue 11-12 (DH). Residue Arg20 participates in 3-amino-2-oxopropyl phosphate binding. His45 acts as the Proton acceptor in catalysis. Positions 47 and 52 each coordinate 1-deoxy-D-xylulose 5-phosphate. Glu72 serves as the catalytic Proton acceptor. Residue Thr102 participates in 1-deoxy-D-xylulose 5-phosphate binding. His193 (proton donor) is an active-site residue. Residues Gly194 and 215-216 (GH) contribute to the 3-amino-2-oxopropyl phosphate site.

Belongs to the PNP synthase family. Homooctamer; tetramer of dimers.

It localises to the cytoplasm. The enzyme catalyses 3-amino-2-oxopropyl phosphate + 1-deoxy-D-xylulose 5-phosphate = pyridoxine 5'-phosphate + phosphate + 2 H2O + H(+). Its pathway is cofactor biosynthesis; pyridoxine 5'-phosphate biosynthesis; pyridoxine 5'-phosphate from D-erythrose 4-phosphate: step 5/5. Its function is as follows. Catalyzes the complicated ring closure reaction between the two acyclic compounds 1-deoxy-D-xylulose-5-phosphate (DXP) and 3-amino-2-oxopropyl phosphate (1-amino-acetone-3-phosphate or AAP) to form pyridoxine 5'-phosphate (PNP) and inorganic phosphate. The chain is Pyridoxine 5'-phosphate synthase from Colwellia psychrerythraea (strain 34H / ATCC BAA-681) (Vibrio psychroerythus).